The primary structure comprises 98 residues: uncharacterized protein (98 aa).

The tract at residues 58–98 (ARFPVEDTAGGLLRTGGHRPQISDEEVSKRHHEQSHGQEDH) is disordered.

This is an uncharacterized protein from Saccharomyces cerevisiae (strain ATCC 204508 / S288c) (Baker's yeast).